A 114-amino-acid polypeptide reads, in one-letter code: MTPLFPESVSTYIYEYSTIWRSGALLIKMMQRVITSCVTGPCKNCYVFLVLGIASWRYIFSYQDGILQSENSKWCSKEKKKKCSAIYPHYNHRDSLGNGAVPRNLLSTYHPMLM.

This is an uncharacterized protein from Saccharomyces cerevisiae (strain ATCC 204508 / S288c) (Baker's yeast).